The chain runs to 89 residues: Protein S100-A8 (89 aa).

N-acetylalanine is present on A2. EF-hand domains lie at 13-48 (IEVYHNYSGIKGNHHALYRDDFRKMVTTECPQFVQN) and 46-81 (VQNKNTESLFKELDVNSDNAINFEEFLVLVIRVGVA). Positions 17 and 27 each coordinate Zn(2+). D33 is a Ca(2+) binding site. At C42 the chain carries S-nitrosocysteine. The Ca(2+) site is built by D59, N61, D63, and E70. Position 83 (H83) interacts with Zn(2+).

The protein belongs to the S-100 family. In terms of assembly, homodimer. Preferentially exists as a heterodimer or heterotetramer with S100A9 known as calprotectin (S100A8/A9). S100A8 interacts with AGER, ATP2A2 and with the heterodimeric complex formed by TLR4 and LY96. Calprotectin (S100A8/9) interacts with CEACAM3 and tubulin filaments in a calcium-dependent manner. Heterotetrameric calprotectin (S100A8/A9) interacts with ANXA6 and associates with tubulin filaments in activated monocytes. S100A8 and calprotectin (S100A8/9) interact with NCF2/P67PHOX, RAC1 and RAC2. Calprotectin (S100A8/9) interacts with CYBA and CYBB. Calprotectin (S100A8/9) interacts with NOS2 to form the iNOS-S100A8/A9 transnitrosylase complex. Calprotectin (S100A8/9) interacts with CD69.

It is found in the secreted. The protein resides in the cytoplasm. The protein localises to the cytoskeleton. It localises to the cell membrane. Functionally, S100A8 is a calcium- and zinc-binding protein which plays a prominent role in the regulation of inflammatory processes and immune response. It can induce neutrophil chemotaxis and adhesion. Predominantly found as calprotectin (S100A8/A9) which has a wide plethora of intra- and extracellular functions. The intracellular functions include: facilitating leukocyte arachidonic acid trafficking and metabolism, modulation of the tubulin-dependent cytoskeleton during migration of phagocytes and activation of the neutrophilic NADPH-oxidase. Also participates in regulatory T-cell differentiation together with CD69. Activates NADPH-oxidase by facilitating the enzyme complex assembly at the cell membrane, transferring arachidonic acid, an essential cofactor, to the enzyme complex and S100A8 contributes to the enzyme assembly by directly binding to NCF2/P67PHOX. The extracellular functions involve pro-inflammatory, antimicrobial, oxidant-scavenging and apoptosis-inducing activities. Its pro-inflammatory activity includes recruitment of leukocytes, promotion of cytokine and chemokine production, and regulation of leukocyte adhesion and migration. Acts as an alarmin or a danger associated molecular pattern (DAMP) molecule and stimulates innate immune cells via binding to pattern recognition receptors such as Toll-like receptor 4 (TLR4) and receptor for advanced glycation endproducts (AGER). Binding to TLR4 and AGER activates the MAP-kinase and NF-kappa-B signaling pathways resulting in the amplification of the pro-inflammatory cascade. Has antimicrobial activity towards bacteria and fungi and exerts its antimicrobial activity probably via chelation of Zn(2+) which is essential for microbial growth. Can induce cell death via autophagy and apoptosis and this occurs through the cross-talk of mitochondria and lysosomes via reactive oxygen species (ROS) and the process involves BNIP3. Can regulate neutrophil number and apoptosis by an anti-apoptotic effect; regulates cell survival via ITGAM/ITGB and TLR4 and a signaling mechanism involving MEK-ERK. Its role as an oxidant scavenger has a protective role in preventing exaggerated tissue damage by scavenging oxidants. The iNOS-S100A8/A9 transnitrosylase complex is proposed to direct selective inflammatory stimulus-dependent S-nitrosylation of multiple targets such as GAPDH, ANXA5, EZR, MSN and VIM by recognizing a [IL]-x-C-x-x-[DE] motif; S100A8 seems to contribute to S-nitrosylation site selectivity. In Rattus norvegicus (Rat), this protein is Protein S100-A8 (S100a8).